Reading from the N-terminus, the 337-residue chain is Glutaminase-asparaginase (337 aa).

Residues 10–337 (ANVVILATGG…KELQRIFWEY (328 aa)) form the Asparaginase/glutaminase domain. Thr-20 functions as the Acyl-ester intermediate in the catalytic mechanism. Substrate-binding positions include Ser-67 and 100-101 (TD).

This sequence belongs to the asparaginase 1 family. As to quaternary structure, homotetramer.

It is found in the periplasm. The catalysed reaction is L-glutamine + H2O = L-glutamate + NH4(+). It catalyses the reaction L-asparagine + H2O = L-aspartate + NH4(+). This chain is Glutaminase-asparaginase (ansB), found in Pseudomonas sp. (strain ATCC 29598 / 7A).